The sequence spans 778 residues: Putative ATP-dependent RNA helicase MJ1505 (778 aa).

The 165-residue stretch at 22–186 folds into the Helicase ATP-binding domain; sequence IAANALKKKT…EICENLGIEH (165 aa). 35-42 is a binding site for ATP; the sequence is LSTGLGKT. Residues 137-140 carry the DEAH box motif; sequence DEAH. The Helicase C-terminal domain maps to 338–516; the sequence is KVVDMVKNIL…EIKEETEEIK (179 aa).

Belongs to the DEAD box helicase family. DEAH subfamily.

The enzyme catalyses ATP + H2O = ADP + phosphate + H(+). The polypeptide is Putative ATP-dependent RNA helicase MJ1505 (Methanocaldococcus jannaschii (strain ATCC 43067 / DSM 2661 / JAL-1 / JCM 10045 / NBRC 100440) (Methanococcus jannaschii)).